Consider the following 435-residue polypeptide: Fibrous sheath-interacting protein 1 (435 aa).

Disordered stretches follow at residues 1-109 (MPMD…DPKL) and 354-393 (SQSHKGDMECDANEERNTEPTPGEKILRDRKEQRDRESRL). A compositionally biased stretch (low complexity) spans 18–32 (SSSRSRPGSRSSNGS). Polar residues predominate over residues 50 to 63 (KLNSGQEGHTSNSG). Positions 64 to 87 (VEERRNSNDAKWADDSKTKPAKES) are enriched in basic and acidic residues. Phosphoserine is present on residues Ser87 and Ser88. Residues 108–154 (KLEETNAVLQNAIRKMHRLDKLLAKKQCREKEVKKQGLEMRVKLWEE) are a coiled coil. Composition is skewed to basic and acidic residues over residues 355-371 (QSHKGDMECDANEERNT) and 378-393 (KILRDRKEQRDRESRL).

This sequence belongs to the FSIP1 family. In terms of assembly, may interact with AKAP4. Detected in male germ cells and testis.

This is Fibrous sheath-interacting protein 1 (Fsip1) from Mus musculus (Mouse).